The primary structure comprises 63 residues: Large ribosomal subunit protein uL29 (63 aa).

This sequence belongs to the universal ribosomal protein uL29 family.

This chain is Large ribosomal subunit protein uL29, found in Shigella dysenteriae serotype 1 (strain Sd197).